A 334-amino-acid polypeptide reads, in one-letter code: S-adenosylmethionine:tRNA ribosyltransferase-isomerase (334 aa).

The protein belongs to the QueA family. As to quaternary structure, monomer.

The protein localises to the cytoplasm. It carries out the reaction 7-aminomethyl-7-carbaguanosine(34) in tRNA + S-adenosyl-L-methionine = epoxyqueuosine(34) in tRNA + adenine + L-methionine + 2 H(+). It participates in tRNA modification; tRNA-queuosine biosynthesis. Its function is as follows. Transfers and isomerizes the ribose moiety from AdoMet to the 7-aminomethyl group of 7-deazaguanine (preQ1-tRNA) to give epoxyqueuosine (oQ-tRNA). This is S-adenosylmethionine:tRNA ribosyltransferase-isomerase from Aquifex aeolicus (strain VF5).